The following is a 1623-amino-acid chain: Histone-lysine N-methyltransferase set-9 (1623 aa).

Disordered regions lie at residues 1–102 (MADG…APQQ), 112–131 (AADA…RPTE), 198–227 (EDAV…SVAS), 448–600 (QRPG…VLRP), and 645–781 (TGQS…DEAA). Basic and acidic residues predominate over residues 62–71 (HQMENQEFYH). The segment covering 77 to 100 (EPQQIPQIPVFQPAAYNPPNYVAP) has biased composition (low complexity). The span at 206–227 (PGTQYRRNQQAGGGLPSTSVAS) shows a compositional bias: polar residues. Residues 554 to 573 (MTQEEKNAHFARLTTDKEKP) show a composition bias toward basic and acidic residues. Positions 587-597 (PHVPPPPPPLV) are enriched in pro residues. Residues 645-669 (TGQSGSSAAARQRTVSGSAARAQTY) show a composition bias toward polar residues. The segment covering 723 to 733 (HRPRGRPKGTR) has biased composition (basic residues). Residues 772–781 (SESEGIDEAA) show a composition bias toward acidic residues. Residues 786–834 (TMRCHCGMDHGDGDTIECEGCKTWQHMACMGLTLKSNTSKYKCEMCLPR) form a PHD-type zinc finger. Residues 857 to 895 (AARKQKRKSEPVEQKQKSSQPSTSRKSAPMALQQPAEPR) form a disordered region. The segment covering 873–882 (KSSQPSTSRK) has biased composition (polar residues). The region spanning 965–1056 (MSSEVKRQPG…RNTEVTLPFD (92 aa)) is the SET domain. 2 stretches are compositionally biased toward basic and acidic residues: residues 1089-1157 (AERH…KKME) and 1172-1194 (AREE…EGKR). 2 disordered regions span residues 1089–1318 (AERH…NVAP) and 1356–1623 (LLAG…TRWN). A coiled-coil region spans residues 1093-1201 (RAMDHKKQEA…GKRKEARRRS (109 aa)). Residues 1242 to 1252 (TTQPSTSSFAT) show a composition bias toward polar residues. Low complexity predominate over residues 1282–1293 (ATTVATPKATTA). Positions 1364 to 1401 (FSEVRAQIEEENRMKERSRKREAKKKAVEKEKKEHRKE) form a coiled coil. 4 stretches are compositionally biased toward basic and acidic residues: residues 1365–1378 (SEVR…NRMK), 1388–1406 (KKAV…KKTN), 1413–1429 (KSEK…EKKP), and 1447–1464 (KKTE…ESSS). Positions 1533–1544 (SSSNTAPTTTIA) are enriched in polar residues.

The protein belongs to the class V-like SAM-binding methyltransferase superfamily. As to expression, predominantly expressed in the germline (at protein level).

The protein localises to the nucleus. The enzyme catalyses L-lysyl-[histone] + S-adenosyl-L-methionine = N(6)-methyl-L-lysyl-[histone] + S-adenosyl-L-homocysteine + H(+). Functionally, histone methyltransferase. Might play a role in transcriptional regulation. Together with set-26, negatively regulates lifespan in a germline-independent, partially daf-16-dependent fashion. Together with set-26, plays a role in germline development and maintenance and might play a role in the restriction of the trimethylation mark on histone H3 'Lys-4'(H3K4me3) to target genes specifically in the germline. The sequence is that of Histone-lysine N-methyltransferase set-9 from Caenorhabditis elegans.